Reading from the N-terminus, the 343-residue chain is DNA-directed RNA polymerase subunit alpha (343 aa).

The tract at residues 1-243 (MTQEIDEKIP…EQLDIFINFD (243 aa)) is alpha N-terminal domain (alpha-NTD). The tract at residues 261–343 (ENPYLDKPVE…NAPSDAETEE (83 aa)) is alpha C-terminal domain (alpha-CTD).

The protein belongs to the RNA polymerase alpha chain family. Homodimer. The RNAP catalytic core consists of 2 alpha, 1 beta, 1 beta' and 1 omega subunit. When a sigma factor is associated with the core the holoenzyme is formed, which can initiate transcription.

The enzyme catalyses RNA(n) + a ribonucleoside 5'-triphosphate = RNA(n+1) + diphosphate. Its function is as follows. DNA-dependent RNA polymerase catalyzes the transcription of DNA into RNA using the four ribonucleoside triphosphates as substrates. The polypeptide is DNA-directed RNA polymerase subunit alpha (Desulfotalea psychrophila (strain LSv54 / DSM 12343)).